Consider the following 256-residue polypeptide: Enolase-phosphatase E1 (256 aa).

The Mg(2+) site is built by Asp13 and Glu15. Substrate-binding positions include 127–128 (SS) and Lys175. Asp202 is a binding site for Mg(2+).

This sequence belongs to the HAD-like hydrolase superfamily. MasA/MtnC family. As to quaternary structure, monomer. The cofactor is Mg(2+).

It is found in the cytoplasm. The protein resides in the nucleus. It carries out the reaction 5-methylsulfanyl-2,3-dioxopentyl phosphate + H2O = 1,2-dihydroxy-5-(methylsulfanyl)pent-1-en-3-one + phosphate. It functions in the pathway amino-acid biosynthesis; L-methionine biosynthesis via salvage pathway; L-methionine from S-methyl-5-thio-alpha-D-ribose 1-phosphate: step 3/6. It participates in amino-acid biosynthesis; L-methionine biosynthesis via salvage pathway; L-methionine from S-methyl-5-thio-alpha-D-ribose 1-phosphate: step 4/6. Its function is as follows. Bifunctional enzyme that catalyzes the enolization of 2,3-diketo-5-methylthiopentyl-1-phosphate (DK-MTP-1-P) into the intermediate 2-hydroxy-3-keto-5-methylthiopentenyl-1-phosphate (HK-MTPenyl-1-P), which is then dephosphorylated to form the acireductone 1,2-dihydroxy-3-keto-5-methylthiopentene (DHK-MTPene). This is Enolase-phosphatase E1 (utr4) from Botryotinia fuckeliana (strain B05.10) (Noble rot fungus).